The primary structure comprises 508 residues: UTP--glucose-1-phosphate uridylyltransferase (508 aa).

Ser-13 bears the Phosphoserine mark. Residues 113-116 (LNGG), Lys-127, Gln-190, and Gly-222 each bind UTP. A substrate-binding site is contributed by 115 to 116 (GG). Lys-127 serves as a coordination point for Mg(2+). Residues His-223 and 251 to 253 (NID) each bind substrate. Asp-253 and Lys-396 together coordinate UTP. Asp-253 contributes to the Mg(2+) binding site. Residue Lys-396 is part of the active site. Thr-426 is modified (phosphothreonine). The residue at position 434 (Ser-434) is a Phosphoserine. Lys-438 carries the post-translational modification N6-acetyllysine. A phosphoserine mark is found at Ser-448 and Ser-461. Residues 457–508 (HLTVSGDVTFGKNVSLKGTVIIIXNHGDRIDIPPGAVLENKIVSGNLRILDH) form an oligomerization region. The interval 502-503 (NL) is critical for end-to-end subunit interaction.

This sequence belongs to the UDPGP type 1 family. Homooctamer.

It localises to the cytoplasm. The catalysed reaction is alpha-D-glucose 1-phosphate + UTP + H(+) = UDP-alpha-D-glucose + diphosphate. Its pathway is glycan biosynthesis; glycogen biosynthesis. Functionally, UTP--glucose-1-phosphate uridylyltransferase catalyzing the conversion of glucose-1-phosphate into UDP-glucose, a crucial precursor for the production of glycogen. In Sus scrofa (Pig), this protein is UTP--glucose-1-phosphate uridylyltransferase (UGP2).